The primary structure comprises 337 residues: Formamidase (337 aa).

The region spanning 14–257 (VVIGLVQLQL…DEIITAEVRP (244 aa)) is the CN hydrolase domain. Glu60 serves as the catalytic Proton acceptor. Catalysis depends on Lys129, which acts as the Proton donor. The Nucleophile role is filled by Cys162.

Belongs to the carbon-nitrogen hydrolase superfamily. Aliphatic amidase family.

The catalysed reaction is formamide + H2O = formate + NH4(+). Its function is as follows. Is an aliphatic amidase with a restricted substrate specificity, as it only hydrolyzes formamide. The protein is Formamidase of Bradyrhizobium diazoefficiens (strain JCM 10833 / BCRC 13528 / IAM 13628 / NBRC 14792 / USDA 110).